Consider the following 370-residue polypeptide: Protein-tyrosine sulfotransferase 1 (370 aa).

Over 1–8 (MVGKLKQN) the chain is Cytoplasmic. The helical; Signal-anchor for type II membrane protein transmembrane segment at 9 to 25 (LLLACLVISSVTVFYLG) threads the bilayer. At 26-370 (QHAMECHHRI…KEKPQTEQVE (345 aa)) the chain is on the lumenal side. N-linked (GlcNAc...) asparagine glycosylation is present at Asn-60. Residue 79 to 83 (RSGTT) coordinates 3'-phosphoadenylyl sulfate. A disulfide bridge links Cys-97 with Cys-157. The active-site Proton donor/acceptor is Glu-100. The tract at residues 102–106 (RVIPR) is interaction with peptide substrate. 3 residues coordinate 3'-phosphoadenylyl sulfate: Arg-184, Ser-192, and Arg-196. A disulfide bridge links Cys-226 with Cys-234. Position 239 (Tyr-239) interacts with 3'-phosphoadenylyl sulfate. Asn-262 is a glycosylation site (N-linked (GlcNAc...) asparagine). Residues 286 to 295 (STDQVIKPVN) and Lys-301 each bind 3'-phosphoadenylyl sulfate.

Belongs to the protein sulfotransferase family. Homodimer. Can also form heterodimers with TPST2. In terms of processing, N-glycosylated. Ubiquitous. Detected in heart, brain, placenta, lung, liver, skeletal muscle, kidney and pancreas.

It is found in the golgi apparatus membrane. The enzyme catalyses L-tyrosyl-[protein] + 3'-phosphoadenylyl sulfate = O-sulfo-L-tyrosine-[protein] + adenosine 3',5'-bisphosphate + H(+). Functionally, catalyzes the O-sulfation of tyrosine residues within acidic motifs of polypeptides, using 3'-phosphoadenylyl sulfate (PAPS) as cosubstrate. This chain is Protein-tyrosine sulfotransferase 1 (TPST1), found in Homo sapiens (Human).